We begin with the raw amino-acid sequence, 332 residues long: MKVTFEQLKEAFNRVLLARGVAAETADACAEMFARTTESGVYSHGVNRFPRFIQQLDNGDIIPDARPQRITSLGAIEQWDAQRAIGNLTAKKMMDRAIELASDHGIGLVALRNANHWMRGGSYGWQAAEKGYIGICWTNSIAVMPPWGSKECRIGTNPLIVAIPSSPITMIDMSMSMFSYGMLEVNRLAGRELPVDGGFDDEGNLTKEPGVIEKNRRILPMGYWKGSGLSIVLDMIATLLSDGASVAEVTQENSDEYGVSQIFIAIEVDKLIDGATRDAKLQRIMDFVTTAERADENVAIRLPGHEFTRLRDENRRNGITVDDSVWAKIQAL.

His44 acts as the Proton donor in catalysis. NAD(+) contacts are provided by residues 168-174, 224-225, and 304-306; these read ITMIDMS, WK, and GHE.

Belongs to the LDH2/MDH2 oxidoreductase family. DlgD subfamily. As to quaternary structure, homodimer.

It localises to the cytoplasm. It catalyses the reaction 3-dehydro-L-gulonate + NAD(+) = 2,3-dioxo-L-gulonate + NADH + H(+). The catalysed reaction is 3-dehydro-L-gulonate + NADP(+) = 2,3-dioxo-L-gulonate + NADPH + H(+). Functionally, catalyzes the reduction of 2,3-diketo-L-gulonate in the presence of NADH, to form 3-keto-L-gulonate. In Citrobacter koseri (strain ATCC BAA-895 / CDC 4225-83 / SGSC4696), this protein is 2,3-diketo-L-gulonate reductase.